The chain runs to 435 residues: Nuclear hormone receptor family member nhr-28 (435 aa).

A DNA-binding region (nuclear receptor) is located at residues 5–80 (KKPCSVCGEA…VGMRKSAVQR (76 aa)). NR C4-type zinc fingers lie at residues 8-28 (CSVCGEAGDGAHFGAEACRAC) and 44-63 (CRAMGACIIQKNVRCMCRAC). The tract at residues 84–106 (LFGRQDSSDGSNPRVSPSTSWPM) is disordered. Polar residues predominate over residues 91–104 (SDGSNPRVSPSTSW). The NR LBD domain occupies 113–374 (IEEPGMATLN…ETFYELVSGR (262 aa)).

Belongs to the nuclear hormone receptor family.

It is found in the nucleus. Its function is as follows. Orphan nuclear receptor. The chain is Nuclear hormone receptor family member nhr-28 from Caenorhabditis briggsae.